A 328-amino-acid chain; its full sequence is Malate dehydrogenase (328 aa).

Position 16 to 22 (16 to 22 (GAAGQIS)) interacts with NAD(+). Substrate contacts are provided by arginine 97 and arginine 103. Residues asparagine 110, glutamine 117, and 134–136 (VGN) contribute to the NAD(+) site. Substrate is bound by residues asparagine 136 and arginine 167. Histidine 192 functions as the Proton acceptor in the catalytic mechanism.

This sequence belongs to the LDH/MDH superfamily. MDH type 2 family.

The enzyme catalyses (S)-malate + NAD(+) = oxaloacetate + NADH + H(+). Catalyzes the reversible oxidation of malate to oxaloacetate. The chain is Malate dehydrogenase from Corynebacterium glutamicum (strain R).